A 392-amino-acid chain; its full sequence is VHSVVDYVSAAEHQVYPWGINDPTEGNRTTLHLPWLKTLSTDWHIDGKGWYSTTRGNNAIAQENPTGGPEYENNYRPKSPLFIFKYPYSKAMTPPSSYRDASITQLFYTTNVYHDVLYILGFNEKAGNFQINNWNKGGVGGDYAILNSQDGSGVNNANFATPPDGQPGRMRMYTWNASIPERDGCFEAGIVIHEYTHGVSNRLTGGPENSRCLAALESGGMGEGWSDFFATAIRLKPGDTRATDYTMGEWASNRPNGIRKYRYSTSLTTNPHMYVDADGLTSVHAIGNIWASMLYELLWNLIDKHGKGDVTKIRPVLKNGVPTDGRHLAMKIVLDGMALQPCLPNFVQARDAILDADKNLTQGSNKCEIWKAFAKRGLGVGAVFNLSKRTGS.

Residues 1–9 (VHSVVDYVS) constitute a propeptide that is removed on maturation. Asparagine 176 is a glycosylation site (N-linked (GlcNAc...) asparagine). Histidine 193 is a binding site for Zn(2+). The active site involves glutamate 194. Histidine 197 contributes to the Zn(2+) binding site. N-linked (GlcNAc...) asparagine glycans are attached at residues asparagine 359 and asparagine 385.

Belongs to the peptidase M36 family. Requires Zn(2+) as cofactor.

The protein localises to the secreted. Functionally, secreted metalloproteinase probably acting as a virulence factor. The chain is Extracellular metalloproteinase 4 (MEP4) from Trichophyton soudanense.